Here is a 670-residue protein sequence, read N- to C-terminus: ATP synthase subunit alpha 2 (670 aa).

ATP is bound at residue 180–187 (GDRATGKT). The disordered stretch occupies residues 525-670 (MPAEDAAGDI…DAEAEARHKR (146 aa)). Residues 543 to 588 (ARGDADRDADHGANREVSREVSPEASREVSREVSREVSHEADRDAA) are compositionally biased toward basic and acidic residues. Low complexity predominate over residues 589 to 599 (ADAARVAGRAP). A compositionally biased stretch (basic and acidic residues) spans 621 to 639 (ADGDRASASRPPPDARGDA). The segment covering 650 to 661 (ADANVNADANVD) has biased composition (low complexity).

This sequence belongs to the ATPase alpha/beta chains family. In terms of assembly, F-type ATPases have 2 components, CF(1) - the catalytic core - and CF(0) - the membrane proton channel. CF(1) has five subunits: alpha(3), beta(3), gamma(1), delta(1), epsilon(1). CF(0) has three main subunits: a(1), b(2) and c(9-12). The alpha and beta chains form an alternating ring which encloses part of the gamma chain. CF(1) is attached to CF(0) by a central stalk formed by the gamma and epsilon chains, while a peripheral stalk is formed by the delta and b chains.

It is found in the cell inner membrane. The catalysed reaction is ATP + H2O + 4 H(+)(in) = ADP + phosphate + 5 H(+)(out). In terms of biological role, produces ATP from ADP in the presence of a proton gradient across the membrane. The alpha chain is a regulatory subunit. The chain is ATP synthase subunit alpha 2 from Burkholderia mallei (strain NCTC 10247).